We begin with the raw amino-acid sequence, 309 residues long: Fructosamine-3-kinase (309 aa).

N-acetylmethionine is present on Met1. 89–91 (EHL) is an ATP binding site. Asp217 functions as the Proton acceptor in the catalytic mechanism.

The protein belongs to the fructosamine kinase family. As to quaternary structure, monomer. In terms of tissue distribution, expressed in red blood cells, brain, heart, kidney and muscle. Lower expression is observed in liver. Not expressed in lung, spleen, testis and thymus.

The enzyme catalyses N(6)-(D-fructosyl)-L-lysyl-[protein] + ATP = N(6)-(3-O-phospho-D-fructosyl)-L-lysyl-[protein] + ADP + H(+). It carries out the reaction N(6)-D-ribulosyl-L-lysyl-[protein] + ATP = N(6)-(3-O-phospho-D-ribulosyl)-L-lysyl-[protein] + ADP + H(+). It catalyses the reaction N(6)-(D-psicosyl)-L-lysyl-[protein] + ATP = N(6)-(3-O-phospho-D-psicosyl)-L-lysyl-[protein] + ADP + H(+). Fructosamine-3-kinase involved in protein deglycation by mediating phosphorylation of fructoselysine residues on glycated proteins, to generate fructoselysine-3 phosphate. Fructoselysine-3 phosphate adducts are unstable and decompose under physiological conditions. Involved in intracellular deglycation in erythrocytes and pancreatic islets. Involved in the response to oxidative stress by mediating deglycation of NFE2L2/NRF2, glycation impairing NFE2L2/NRF2 function. Also able to phosphorylate psicosamines and ribulosamines. The polypeptide is Fructosamine-3-kinase (Mus musculus (Mouse)).